The chain runs to 63 residues: Protein DsrB (63 aa).

Belongs to the DsrB family.

The polypeptide is Protein DsrB (Yersinia enterocolitica serotype O:8 / biotype 1B (strain NCTC 13174 / 8081)).